A 484-amino-acid polypeptide reads, in one-letter code: Endoglucanase 9 (484 aa).

The first 21 residues, 1–21, serve as a signal peptide directing secretion; it reads MTSLFFFVLLFSSLLISNGDA. Asp-77 (nucleophile) is an active-site residue. Active-site residues include His-402, Asp-453, and Glu-462.

The protein belongs to the glycosyl hydrolase 9 (cellulase E) family. Specifically expressed in root cap cells.

The protein resides in the secreted. It localises to the cell wall. It carries out the reaction Endohydrolysis of (1-&gt;4)-beta-D-glucosidic linkages in cellulose, lichenin and cereal beta-D-glucans.. The polypeptide is Endoglucanase 9 (CEL3) (Arabidopsis thaliana (Mouse-ear cress)).